We begin with the raw amino-acid sequence, 671 residues long: NADPH--cytochrome P450 reductase (671 aa).

Residues 1-14 (MSAEHVEEVVSEEP) are Lumenal-facing. Residues 15 to 35 (FLGTLDIALLVVLLVGATWYF) traverse the membrane as a helical segment. At 36–671 (MRSRKKEEAP…QKRYSADVWS (636 aa)) the chain is on the cytoplasmic side. Positions 77–221 (LVVFYGSQTG…DFITWKDRFW (145 aa)) constitute a Flavodoxin-like domain. FMN contacts are provided by residues 83–88 (SQTGTA), 135–138 (ATYG), 170–179 (LGNKTYEHYN), and Asp205. Positions 276 to 515 (KNPFLASVIV…FIRKSQFRLP (240 aa)) constitute an FAD-binding FR-type domain. Arg295 serves as a coordination point for NADP(+). Residues 451-454 (RYYS), 469-471 (TAV), Tyr475, and 485-488 (GVAT) contribute to the FAD site. Residues Thr529, 589 to 590 (SR), 595 to 599 (KIYVT), and Asp632 contribute to the NADP(+) site. Trp670 provides a ligand contact to FAD.

It belongs to the NADPH--cytochrome P450 reductase family. The protein in the N-terminal section; belongs to the flavodoxin family. In the C-terminal section; belongs to the flavoprotein pyridine nucleotide cytochrome reductase family. Requires FAD as cofactor. It depends on FMN as a cofactor.

The protein resides in the endoplasmic reticulum membrane. The enzyme catalyses 2 oxidized [cytochrome P450] + NADPH = 2 reduced [cytochrome P450] + NADP(+) + H(+). Its function is as follows. This enzyme is required for electron transfer from NADP to cytochrome P450 in microsomes. It can also provide electron transfer to heme oxygenase and cytochrome B5. The sequence is that of NADPH--cytochrome P450 reductase from Musca domestica (House fly).